Consider the following 530-residue polypeptide: Sensor protein kinase PilS (530 aa).

6 helical membrane-spanning segments follow: residues 25–37 (LTIG…LISS), 57–70 (WCYL…ALFL), 76–98 (LLPI…YAGG), 101–119 (PSGI…NILL), 124–144 (GLVI…FLSL), and 156–174 (AGGL…QALV). Residues 175 to 530 (RRQEQTETLA…ITFAHPRKLS (356 aa)) lie on the Cytoplasmic side of the membrane. In terms of domain architecture, PAS spans 196–260 (ELNALILQRM…KQWRLNPSLR (65 aa)). The Histidine kinase domain maps to 316-527 (GIAHEIRNPL…CFRITFAHPR (212 aa)). H319 is subject to Phosphohistidine; by autocatalysis.

In terms of assembly, interacts with PilA.

It is found in the cell inner membrane. The enzyme catalyses ATP + protein L-histidine = ADP + protein N-phospho-L-histidine.. In terms of biological role, member of the two-component regulatory system PilS/PilR that regulates the expression of multiple genes including the type IV pilus (T4P) major subunit PilA. Thereby, plays a major role in the regulation of multiple motility pathways. Functions as a membrane-associated protein kinase that phosphorylates PilR in response to environmental signals leading to activation of specific gene promoters including the pilin gene. In Pseudomonas aeruginosa (strain ATCC 15692 / DSM 22644 / CIP 104116 / JCM 14847 / LMG 12228 / 1C / PRS 101 / PAO1), this protein is Sensor protein kinase PilS (pilS).